A 44-amino-acid chain; its full sequence is Homeobox protein DLX-1 (44 aa).

Positions 19–44 (RALSAGSPPVPPGWNRIPPLGRAQEE) are disordered.

The protein belongs to the distal-less homeobox family. As to quaternary structure, interacts with SMAD4 (via homeobox DNA-binding domain). Interacts (via homeobox DNA-binding domain) with POU4F2; this interaction suppresses DLX1-mediated transcriptional activity in postnatal retina and enhances retinal ganglion cell (RGC) differentiation.

It is found in the nucleus. Plays a role as a transcriptional activator or repressor. Inhibits several cytokine signaling pathways, such as TGFB1, activin-A/INHBA and BMP4 by interfering with the transcriptional stimulatory activity of transcription factors, such as MSX2, FAST2, SMAD2 and SMAD3 during hematopoietic cell differentiation. Plays a role in terminal differentiation of interneurons, such as amacrine and bipolar cells in the developing retina. Likely to play a regulatory role in the development of the ventral forebrain. May play a role in craniofacial patterning and morphogenesis and may be involved in the early development of diencephalic subdivisions. The chain is Homeobox protein DLX-1 (Dlx1) from Rattus norvegicus (Rat).